Here is a 156-residue protein sequence, read N- to C-terminus: MPRKGPVAKRDVLPDPIYNSKLVTRLINKMMVDGKRGKSQAILYSAFDIIAQETGKDPMEVFEQAMKNIMPLLEVKARRVGGANYQVPIEVRADRRSTLGLRWLVNYARLRGEKTMEVRVAREIMDAANNTGASVKKREDTHKMADANRAFAHYRW.

It belongs to the universal ribosomal protein uS7 family. Part of the 30S ribosomal subunit. Contacts proteins S9 and S11.

One of the primary rRNA binding proteins, it binds directly to 16S rRNA where it nucleates assembly of the head domain of the 30S subunit. Is located at the subunit interface close to the decoding center, probably blocks exit of the E-site tRNA. This Listeria innocua serovar 6a (strain ATCC BAA-680 / CLIP 11262) protein is Small ribosomal subunit protein uS7.